The primary structure comprises 969 residues: Protein translocase subunit SecA (969 aa).

ATP-binding positions include glutamine 99, 117–121 (GEGKT), and aspartate 631.

Belongs to the SecA family. In terms of assembly, monomer and homodimer. Part of the essential Sec protein translocation apparatus which comprises SecA, SecYEG and auxiliary proteins SecDF. Other proteins may also be involved.

It is found in the cell inner membrane. The protein localises to the cytoplasm. It carries out the reaction ATP + H2O + cellular proteinSide 1 = ADP + phosphate + cellular proteinSide 2.. Its function is as follows. Part of the Sec protein translocase complex. Interacts with the SecYEG preprotein conducting channel. Has a central role in coupling the hydrolysis of ATP to the transfer of proteins into and across the cell membrane, serving as an ATP-driven molecular motor driving the stepwise translocation of polypeptide chains across the membrane. This is Protein translocase subunit SecA from Chlamydia felis (strain Fe/C-56) (Chlamydophila felis).